The chain runs to 474 residues: Glutamate--tRNA ligase (474 aa).

The short motif at P9–G19 is the 'HIGH' region element. The short motif at K240 to R244 is the 'KMSKS' region element. K243 contacts ATP.

It belongs to the class-I aminoacyl-tRNA synthetase family. Glutamate--tRNA ligase type 1 subfamily. Monomer.

The protein localises to the cytoplasm. The enzyme catalyses tRNA(Glu) + L-glutamate + ATP = L-glutamyl-tRNA(Glu) + AMP + diphosphate. In terms of biological role, catalyzes the attachment of glutamate to tRNA(Glu) in a two-step reaction: glutamate is first activated by ATP to form Glu-AMP and then transferred to the acceptor end of tRNA(Glu). In Photobacterium profundum (strain SS9), this protein is Glutamate--tRNA ligase.